The chain runs to 474 residues: 3-isopropylmalate dehydratase large subunit (474 aa).

[4Fe-4S] cluster-binding residues include Cys-350, Cys-411, and Cys-414.

Belongs to the aconitase/IPM isomerase family. LeuC type 1 subfamily. As to quaternary structure, heterodimer of LeuC and LeuD. [4Fe-4S] cluster is required as a cofactor.

The enzyme catalyses (2R,3S)-3-isopropylmalate = (2S)-2-isopropylmalate. Its pathway is amino-acid biosynthesis; L-leucine biosynthesis; L-leucine from 3-methyl-2-oxobutanoate: step 2/4. Functionally, catalyzes the isomerization between 2-isopropylmalate and 3-isopropylmalate, via the formation of 2-isopropylmaleate. The chain is 3-isopropylmalate dehydratase large subunit from Hydrogenovibrio crunogenus (strain DSM 25203 / XCL-2) (Thiomicrospira crunogena).